A 720-amino-acid polypeptide reads, in one-letter code: Transcription factor bHLH155 (720 aa).

Positions 522–534 (YPSSSSDQFQTSL) are enriched in polar residues. The interval 522–558 (YPSSSSDQFQTSLDIPKKNKKRAKPGESSRPRPRDRQ) is disordered. Positions 540 to 547 (NKKRAKPG) match the Nuclear localization signal motif. A bHLH domain is found at 544–593 (AKPGESSRPRPRDRQLIQDRIKELRELVPNGSKCSIDSLLERTIKHMLFL). Over residues 545 to 558 (KPGESSRPRPRDRQ) the composition is skewed to basic and acidic residues.

This sequence belongs to the bHLH protein family. LHW subfamily. As to quaternary structure, homodimer.

It localises to the nucleus. Functionally, transcription factor that may regulate root development. The sequence is that of Transcription factor bHLH155 (BHLH155) from Arabidopsis thaliana (Mouse-ear cress).